Consider the following 283-residue polypeptide: NAD kinase (283 aa).

Catalysis depends on D61, which acts as the Proton acceptor. NAD(+) is bound by residues D61–G62, N134–D135, R145, D164, T175–S180, and Q234.

Belongs to the NAD kinase family. It depends on a divalent metal cation as a cofactor.

It is found in the cytoplasm. It catalyses the reaction NAD(+) + ATP = ADP + NADP(+) + H(+). Functionally, involved in the regulation of the intracellular balance of NAD and NADP, and is a key enzyme in the biosynthesis of NADP. Catalyzes specifically the phosphorylation on 2'-hydroxyl of the adenosine moiety of NAD to yield NADP. The protein is NAD kinase of Clostridium kluyveri (strain NBRC 12016).